The sequence spans 913 residues: Clumping factor B (913 aa).

Positions 1-44 (MKKRIDYLSNKQNKYSIRRFTVGTTSVIVGATILFGIGNHQAQA) are cleaved as a signal peptide. The YSIRK-G/S signaling motif motif lies at 15-26 (YSIRRFTVGTTS). Composition is skewed to polar residues over residues 44 to 61 (ASEQ…NASA) and 68 to 95 (MIET…NVDS). The disordered stretch occupies residues 44–192 (ASEQSNDTTQ…QGTSKPSVRT (149 aa)). A ligand binding A region region spans residues 45 to 542 (SEQSNDTTQS…GSADGDSAVN (498 aa)). A compositionally biased stretch (low complexity) spans 96–119 (TTKPMSTQTSNTTTTEPASTNETP). The span at 120–189 (QPTAIKNQAT…SNAQGTSKPS (70 aa)) shows a compositional bias: polar residues. An MIDAS-like motif motif is present at residues 272–276 (DYSNS). The disordered stretch occupies residues 530 to 885 (YGGGSADGDS…ETGDKSENTN (356 aa)). The span at 545–555 (DPTPGPPVDPE) shows a compositional bias: pro residues. A compositionally biased stretch (acidic residues) spans 556 to 837 (PSPDPEPEPT…SDSDSDSDSD (282 aa)). Residues 841–852 (RVTPPNNEQKAP) show a composition bias toward polar residues. Over residues 869–882 (HKTDALPETGDKSE) the composition is skewed to basic and acidic residues. Positions 874-878 (LPETG) match the LPXTG sorting signal motif. A Pentaglycyl murein peptidoglycan amidated threonine modification is found at threonine 877. The propeptide at 878–913 (GDKSENTNATLFGAMMALLGSLLLFRKRKQDHKEKA) is removed by sortase.

The protein belongs to the serine-aspartate repeat-containing protein (SDr) family. Post-translationally, proteolytically cleaved by aureolysin (aur). This cleavage leads to the inactivation of ClfB.

The protein localises to the secreted. It is found in the cell wall. Its function is as follows. Cell surface-associated protein implicated in virulence by promoting bacterial attachment to both alpha- and beta-chains of human fibrinogen and inducing the formation of bacterial clumps. This Staphylococcus aureus (strain COL) protein is Clumping factor B (clfB).